A 319-amino-acid polypeptide reads, in one-letter code: 8-methylmenaquinol:fumarate reductase iron-sulfur subunit (319 aa).

Residues 1–96 enclose the 2Fe-2S ferredoxin-type domain; it reads MKFIIDRFDG…TFRISPLGNH (96 aa). [2Fe-2S] cluster-binding residues include C51, C56, C59, and C71. 2 consecutive 4Fe-4S ferredoxin-type domains span residues 139 to 168 and 193 to 224; these read FDRIIKQWDCILCGSCVSECNKFSADQSDY and VKPAVANGLWNCVHCHECTNRCPKHISAAEDI. Residues C148, C151, C154, C158, C204, C207, C210, and C214 each coordinate [4Fe-4S] cluster.

This sequence belongs to the succinate dehydrogenase/fumarate reductase iron-sulfur protein family. As to quaternary structure, the MFR complex is composed of three subunits: a flavoprotein (SdhA), an iron-sulfur protein (SdhB), and one hydrophobic anchor protein (SdhE). The cofactor is [2Fe-2S] cluster. Requires [4Fe-4S] cluster as cofactor.

The protein localises to the periplasm. The protein resides in the cell membrane. The enzyme catalyses 8-methylmenaquinone-6 + succinate = 8-methylmenaquinol-6 + fumarate. Its function is as follows. Iron-sulfur subunit of 8-methylmenaquinol:fumarate reductase (MFR), that catalyzes the reduction of fumarate using 8-methylmenaquinol-6 as electron donor. The complex shows no succinate oxidation activity. Is involved in anaerobic metabolism. The sequence is that of 8-methylmenaquinol:fumarate reductase iron-sulfur subunit from Wolinella succinogenes (strain ATCC 29543 / DSM 1740 / CCUG 13145 / JCM 31913 / LMG 7466 / NCTC 11488 / FDC 602W) (Vibrio succinogenes).